A 295-amino-acid polypeptide reads, in one-letter code: Nucleotide-binding protein BLi03725/BL03417 (295 aa).

16 to 23 contributes to the ATP binding site; the sequence is GMSGAGKT. A GTP-binding site is contributed by 67–70; it reads DLRG.

It belongs to the RapZ-like family.

Its function is as follows. Displays ATPase and GTPase activities. This chain is Nucleotide-binding protein BLi03725/BL03417, found in Bacillus licheniformis (strain ATCC 14580 / DSM 13 / JCM 2505 / CCUG 7422 / NBRC 12200 / NCIMB 9375 / NCTC 10341 / NRRL NRS-1264 / Gibson 46).